Reading from the N-terminus, the 188-residue chain is uncharacterized protein (188 aa).

Positions 1–15 are enriched in basic and acidic residues; the sequence is MVSSKDKIKEELKQE. The segment at 1–21 is disordered; sequence MVSSKDKIKEELKQEEPEENV.

This is an uncharacterized protein from Saccharolobus islandicus (Sulfolobus islandicus).